Consider the following 258-residue polypeptide: Tryptophan synthase alpha chain (258 aa).

Residues E46 and D57 each act as proton acceptor in the active site.

Belongs to the TrpA family. Tetramer of two alpha and two beta chains.

The enzyme catalyses (1S,2R)-1-C-(indol-3-yl)glycerol 3-phosphate + L-serine = D-glyceraldehyde 3-phosphate + L-tryptophan + H2O. Its pathway is amino-acid biosynthesis; L-tryptophan biosynthesis; L-tryptophan from chorismate: step 5/5. The alpha subunit is responsible for the aldol cleavage of indoleglycerol phosphate to indole and glyceraldehyde 3-phosphate. The chain is Tryptophan synthase alpha chain from Phocaeicola vulgatus (strain ATCC 8482 / DSM 1447 / JCM 5826 / CCUG 4940 / NBRC 14291 / NCTC 11154) (Bacteroides vulgatus).